A 393-amino-acid chain; its full sequence is tRNA (guanine-N(7)-)-methyltransferase (393 aa).

S-adenosyl-L-methionine-binding residues include E124, E149, and D176. D232 is a binding site for substrate.

Belongs to the class I-like SAM-binding methyltransferase superfamily. TrmB family.

The enzyme catalyses guanosine(46) in tRNA + S-adenosyl-L-methionine = N(7)-methylguanosine(46) in tRNA + S-adenosyl-L-homocysteine. Its pathway is tRNA modification; N(7)-methylguanine-tRNA biosynthesis. Its function is as follows. Catalyzes the formation of N(7)-methylguanine at position 46 (m7G46) in tRNA. The protein is tRNA (guanine-N(7)-)-methyltransferase of Helicobacter pylori (strain HPAG1).